Reading from the N-terminus, the 570-residue chain is DNA polymerase/3'-5' exonuclease PolX (570 aa).

The interval 1 to 315 (MHKKDIIRLL…PLIPPEIRES (315 aa)) is DNA polymerase type-X. 3 residues coordinate a divalent metal cation: Asp193, Asp195, and Asp240. The interval 333–570 (QIKGDLHMHS…DVEAFLKRND (238 aa)) is 3'-5' exonuclease. Mn(2+) contacts are provided by His339, His341, His371, Glu410, His437, His465, Asp526, and His528.

It in the N-terminal section; belongs to the DNA polymerase type-X family. In the C-terminal section; belongs to the PHP family. As to quaternary structure, monomer. Requires Mn(2+) as cofactor. Mg(2+) serves as cofactor.

The catalysed reaction is DNA(n) + a 2'-deoxyribonucleoside 5'-triphosphate = DNA(n+1) + diphosphate. The enzyme catalyses Exonucleolytic cleavage in the 3'- to 5'-direction to yield nucleoside 5'-phosphates.. Its activity is regulated as follows. The polymerization activity is inhibited in the presence of 2'-3'-dideoxynucleoside 5'-triphosphate (ddNTP). In terms of biological role, strictly DNA-template-directed DNA polymerase, preferentially acting on DNA structures containing gaps from one to a few nucleotides and bearing a phosphate group at the 5' end of the downstream DNA. The fact that PolX is able to conduct filling of a single-nucleotide gap, allowing further sealing of the resulting nick by a DNA ligase, points to a putative role in base excision repair (BER) during the B.subtilis life cycle. Moreover, also possesses a 3'-5' exonuclease activity able to edit unpaired 3'-termini in a gapped DNA substrate and likely involved in resecting unannealed 3'-termini during DNA repair. The same PolX molecule could perform the subsequent gap-filling step. Does not display 5'-deoxyribose 5'-phosphate (dRP) lyase activity, as predicted by the lack of the lysine and tyrosine residues responsible for the dRP lyase activity in some other PolX members. This chain is DNA polymerase/3'-5' exonuclease PolX (polX), found in Bacillus subtilis (strain 168).